Here is a 181-residue protein sequence, read N- to C-terminus: Adenylyl-sulfate kinase (181 aa).

Residue 13–20 coordinates ATP; it reads GVSGAGKS. The active-site Phosphoserine intermediate is S87.

The protein belongs to the APS kinase family.

It catalyses the reaction adenosine 5'-phosphosulfate + ATP = 3'-phosphoadenylyl sulfate + ADP + H(+). It participates in sulfur metabolism; hydrogen sulfide biosynthesis; sulfite from sulfate: step 2/3. Catalyzes the synthesis of activated sulfate. The protein is Adenylyl-sulfate kinase of Burkholderia ambifaria (strain ATCC BAA-244 / DSM 16087 / CCUG 44356 / LMG 19182 / AMMD) (Burkholderia cepacia (strain AMMD)).